Consider the following 316-residue polypeptide: 4-hydroxy-3-methylbut-2-enyl diphosphate reductase (316 aa).

C12 is a [4Fe-4S] cluster binding site. H41 and H74 together coordinate (2E)-4-hydroxy-3-methylbut-2-enyl diphosphate. Dimethylallyl diphosphate-binding residues include H41 and H74. Isopentenyl diphosphate contacts are provided by H41 and H74. C96 lines the [4Fe-4S] cluster pocket. H124 contacts (2E)-4-hydroxy-3-methylbut-2-enyl diphosphate. H124 contacts dimethylallyl diphosphate. H124 serves as a coordination point for isopentenyl diphosphate. E126 functions as the Proton donor in the catalytic mechanism. T169 lines the (2E)-4-hydroxy-3-methylbut-2-enyl diphosphate pocket. C199 lines the [4Fe-4S] cluster pocket. (2E)-4-hydroxy-3-methylbut-2-enyl diphosphate is bound by residues S227, S228, N229, and S271. Residues S227, S228, N229, and S271 each coordinate dimethylallyl diphosphate. S227, S228, N229, and S271 together coordinate isopentenyl diphosphate.

Belongs to the IspH family. It depends on [4Fe-4S] cluster as a cofactor.

The enzyme catalyses isopentenyl diphosphate + 2 oxidized [2Fe-2S]-[ferredoxin] + H2O = (2E)-4-hydroxy-3-methylbut-2-enyl diphosphate + 2 reduced [2Fe-2S]-[ferredoxin] + 2 H(+). It catalyses the reaction dimethylallyl diphosphate + 2 oxidized [2Fe-2S]-[ferredoxin] + H2O = (2E)-4-hydroxy-3-methylbut-2-enyl diphosphate + 2 reduced [2Fe-2S]-[ferredoxin] + 2 H(+). It functions in the pathway isoprenoid biosynthesis; dimethylallyl diphosphate biosynthesis; dimethylallyl diphosphate from (2E)-4-hydroxy-3-methylbutenyl diphosphate: step 1/1. Its pathway is isoprenoid biosynthesis; isopentenyl diphosphate biosynthesis via DXP pathway; isopentenyl diphosphate from 1-deoxy-D-xylulose 5-phosphate: step 6/6. In terms of biological role, catalyzes the conversion of 1-hydroxy-2-methyl-2-(E)-butenyl 4-diphosphate (HMBPP) into a mixture of isopentenyl diphosphate (IPP) and dimethylallyl diphosphate (DMAPP). Acts in the terminal step of the DOXP/MEP pathway for isoprenoid precursor biosynthesis. This Xanthomonas axonopodis pv. citri (strain 306) protein is 4-hydroxy-3-methylbut-2-enyl diphosphate reductase.